The primary structure comprises 226 residues: 3-isopropylmalate dehydratase small subunit (226 aa).

Residues 204–226 form a disordered region; sequence EAETVESAREPEAVEWAGPLADR.

This sequence belongs to the LeuD family. LeuD type 1 subfamily. As to quaternary structure, heterodimer of LeuC and LeuD.

It carries out the reaction (2R,3S)-3-isopropylmalate = (2S)-2-isopropylmalate. The protein operates within amino-acid biosynthesis; L-leucine biosynthesis; L-leucine from 3-methyl-2-oxobutanoate: step 2/4. Catalyzes the isomerization between 2-isopropylmalate and 3-isopropylmalate, via the formation of 2-isopropylmaleate. The chain is 3-isopropylmalate dehydratase small subunit from Bifidobacterium animalis subsp. lactis (strain AD011).